A 956-amino-acid polypeptide reads, in one-letter code: Outer capsid protein VP2 (956 aa).

This sequence belongs to the orbivirus VP2 family.

It is found in the virion. The VP2 protein is one of the two proteins (with VP5) which constitute the virus particle outer capsid. It is the major target of the host immunogenic response. Responsible for viral attachment to target host cell, probably by binding to sialic acid. This attachment induces virion internalization predominantly through clathrin-dependent endocytosis. The polypeptide is Outer capsid protein VP2 (Segment-2) (Bluetongue virus 11 (isolate USA) (BTV 11)).